A 303-amino-acid chain; its full sequence is AP2-like ethylene-responsive transcription factor At1g79700 (303 aa).

The segment covering M1 to K10 has biased composition (basic residues). The disordered stretch occupies residues M1–G55. Polar residues predominate over residues K20 to L32. DNA-binding regions (AP2/ERF) lie at residues P52 to P118 and K154 to D202. The disordered stretch occupies residues A212–S259. Residues D214–E243 are compositionally biased toward basic and acidic residues.

This sequence belongs to the AP2/ERF transcription factor family. AP2 subfamily.

It is found in the nucleus. In terms of biological role, probably acts as a transcriptional activator. Binds to the GCC-box pathogenesis-related promoter element. May be involved in the regulation of gene expression by stress factors and by components of stress signal transduction pathways. The polypeptide is AP2-like ethylene-responsive transcription factor At1g79700 (Arabidopsis thaliana (Mouse-ear cress)).